Reading from the N-terminus, the 214-residue chain is Probable nicotinate-nucleotide adenylyltransferase (214 aa).

Belongs to the NadD family.

The catalysed reaction is nicotinate beta-D-ribonucleotide + ATP + H(+) = deamido-NAD(+) + diphosphate. The protein operates within cofactor biosynthesis; NAD(+) biosynthesis; deamido-NAD(+) from nicotinate D-ribonucleotide: step 1/1. In terms of biological role, catalyzes the reversible adenylation of nicotinate mononucleotide (NaMN) to nicotinic acid adenine dinucleotide (NaAD). This chain is Probable nicotinate-nucleotide adenylyltransferase, found in Rhodopirellula baltica (strain DSM 10527 / NCIMB 13988 / SH1).